The chain runs to 350 residues: S-adenosylmethionine:tRNA ribosyltransferase-isomerase (350 aa).

This sequence belongs to the QueA family. Monomer.

The protein localises to the cytoplasm. It carries out the reaction 7-aminomethyl-7-carbaguanosine(34) in tRNA + S-adenosyl-L-methionine = epoxyqueuosine(34) in tRNA + adenine + L-methionine + 2 H(+). It participates in tRNA modification; tRNA-queuosine biosynthesis. Transfers and isomerizes the ribose moiety from AdoMet to the 7-aminomethyl group of 7-deazaguanine (preQ1-tRNA) to give epoxyqueuosine (oQ-tRNA). The chain is S-adenosylmethionine:tRNA ribosyltransferase-isomerase from Bacillus cereus (strain ZK / E33L).